Reading from the N-terminus, the 133-residue chain is Large-conductance mechanosensitive channel (133 aa).

A run of 2 helical transmembrane segments spans residues 14–34 and 67–87; these read VVDL…VSSL and GNFI…FMFV.

The protein belongs to the MscL family. In terms of assembly, homopentamer.

It is found in the cell membrane. Functionally, channel that opens in response to stretch forces in the membrane lipid bilayer. May participate in the regulation of osmotic pressure changes within the cell. The protein is Large-conductance mechanosensitive channel of Bacillus cereus (strain AH187).